A 226-amino-acid chain; its full sequence is Large ribosomal subunit protein uL1 (226 aa).

The protein belongs to the universal ribosomal protein uL1 family. In terms of assembly, part of the 50S ribosomal subunit.

Functionally, binds directly to 23S rRNA. The L1 stalk is quite mobile in the ribosome, and is involved in E site tRNA release. In terms of biological role, protein L1 is also a translational repressor protein, it controls the translation of the L11 operon by binding to its mRNA. The sequence is that of Large ribosomal subunit protein uL1 from Mycoplasmoides gallisepticum (strain R(low / passage 15 / clone 2)) (Mycoplasma gallisepticum).